Consider the following 272-residue polypeptide: NH(3)-dependent NAD(+) synthetase (272 aa).

Residue Gly45–Ser52 coordinates ATP. Asp51 provides a ligand contact to Mg(2+). Arg138 lines the deamido-NAD(+) pocket. Thr158 is an ATP binding site. Glu163 provides a ligand contact to Mg(2+). 2 residues coordinate deamido-NAD(+): Lys171 and Asp178. ATP is bound by residues Lys187 and Thr209. Residue His258 to Lys259 participates in deamido-NAD(+) binding.

Belongs to the NAD synthetase family. In terms of assembly, homodimer.

The catalysed reaction is deamido-NAD(+) + NH4(+) + ATP = AMP + diphosphate + NAD(+) + H(+). Its pathway is cofactor biosynthesis; NAD(+) biosynthesis; NAD(+) from deamido-NAD(+) (ammonia route): step 1/1. Functionally, catalyzes the ATP-dependent amidation of deamido-NAD to form NAD. Uses ammonia as a nitrogen source. This chain is NH(3)-dependent NAD(+) synthetase, found in Bacillus cereus (strain Q1).